We begin with the raw amino-acid sequence, 152 residues long: Superoxide dismutase [Cu-Zn] (152 aa).

Cu cation contacts are provided by His45, His47, and His62. Residues 61–87 (PHFNPAGKEHGAPEDENRHAGDLGNAT) are disordered. Positions 62, 70, 79, and 82 each coordinate Zn(2+). The span at 67–81 (GKEHGAPEDENRHAG) shows a compositional bias: basic and acidic residues. Residue His119 participates in Cu cation binding.

The protein belongs to the Cu-Zn superoxide dismutase family. Homodimer. Requires Cu cation as cofactor. It depends on Zn(2+) as a cofactor.

It localises to the cytoplasm. It catalyses the reaction 2 superoxide + 2 H(+) = H2O2 + O2. Destroys radicals which are normally produced within the cells and which are toxic to biological systems. The polypeptide is Superoxide dismutase [Cu-Zn] (Zingiber officinale (Ginger)).